Here is a 534-residue protein sequence, read N- to C-terminus: Pentatricopeptide repeat-containing protein At5g08305 (534 aa).

PPR repeat units follow at residues 41–71, 72–106, 107–141, 142–172, 173–203, 204–238, 240–274, 275–305, 308–342, 343–377, and 378–408; these read PFVS…LSDP, PNYG…GLLP, DHMT…GLEW, DLFI…MPHK, NLVT…MSER, DVVT…GSSK, NEVT…HLPL, TVIL…ASVK, DALM…KIDP, DEIT…GAEP, and KSEH…MPIK. The type E motif stretch occupies residues 413–488; the sequence is MLGALLNGCI…IAGHSILDLD (76 aa). The segment at 489–519 is type E(+) motif; sequence GTRHRFIAHDKTHFHSDKIYAVLQLTGAWMN.

This sequence belongs to the PPR family. PCMP-E subfamily.

The protein is Pentatricopeptide repeat-containing protein At5g08305 (PCMP-E105) of Arabidopsis thaliana (Mouse-ear cress).